We begin with the raw amino-acid sequence, 446 residues long: Glutamate--tRNA ligase (446 aa).

The 'HIGH' region signature appears at 9–19; sequence PSPTGLLHVGN. The short motif at 240-244 is the 'KMSKS' region element; the sequence is GLSKR. Lysine 243 is a binding site for ATP.

The protein belongs to the class-I aminoacyl-tRNA synthetase family. Glutamate--tRNA ligase type 1 subfamily. Monomer.

It localises to the cytoplasm. The catalysed reaction is tRNA(Glu) + L-glutamate + ATP = L-glutamyl-tRNA(Glu) + AMP + diphosphate. Its function is as follows. Catalyzes the attachment of glutamate to tRNA(Glu) in a two-step reaction: glutamate is first activated by ATP to form Glu-AMP and then transferred to the acceptor end of tRNA(Glu). The polypeptide is Glutamate--tRNA ligase (Azospirillum brasilense).